A 327-amino-acid polypeptide reads, in one-letter code: PDZ and LIM domain protein 1 (327 aa).

Threonine 2 is subject to N-acetylthreonine. One can recognise a PDZ domain in the interval 3–85 (TQQIVLQGPG…NMTLTVSRSE (83 aa)). Phosphoserine occurs at positions 90 and 130. At tyrosine 142 the chain carries Phosphotyrosine. The disordered stretch occupies residues 161–186 (VESKTSASGEEANSRPSAQPHPSGGL). The 60-residue stretch at 256 to 315 (PICDKCGTGIVGVFVKLRDHHRHPECYVCTDCGINLKQKGHFFVGDQIYCEKHARERVTP) folds into the LIM zinc-binding domain. Zn(2+) contacts are provided by cysteine 258, cysteine 261, histidine 278, cysteine 281, cysteine 284, cysteine 287, cysteine 305, and histidine 308. Phosphothreonine is present on threonine 314. Position 319 is a phosphotyrosine (tyrosine 319).

Interacts with ACTN1. Interacts with ACTN2 and ACTN4. Interacts with PDLIM4. Expressed most abundantly in heart, lung and liver, moderately in spleen and skeletal muscle, and at extremely low levels (if at all) in testis and brain tissues.

The protein localises to the cytoplasm. It is found in the cytoskeleton. The protein resides in the myofibril. Its subcellular location is the sarcomere. It localises to the z line. In terms of biological role, cytoskeletal protein that may act as an adapter that brings other proteins (like kinases) to the cytoskeleton. Involved in assembly, disassembly and directioning of stress fibers in fibroblasts. Required for the localization of ACTN1 and PALLD to stress fibers. Required for cell migration and in maintaining cell polarity of fibroblasts. The polypeptide is PDZ and LIM domain protein 1 (Pdlim1) (Rattus norvegicus (Rat)).